The following is a 1191-amino-acid chain: MNAIQQKCRPKHQVLVLKCYPRTAKGAVDVKPNSSELSYLLFYAQSRRSKIQKVGSFLEKKTASDVWRQRIGNVQVTLQILTALIEKTPKDLPLFASCVLQILEQILKSRDITMVESSIPTFEAFCTHHDPTSLLADQAYLRQYLDVVQQYASLASTRAFAGKLEPSKPIALRWRNTGLKAIKSVASSDSLSSVATQQYDLAVPMILENLWTDNEDFLDVLHQRAEMGEKLGGALLRRRTSVATVQTAESESNTNPIALADTAVDMDKLAEEDTGVLAMECLRQIFVATNRSQVHAATVALLKFIQERVSQQEEVVRTDSDGRDSGWAVKMFLLAARWAPVADRFTILVTAMDSLAQQPLTDEALQQHIVLAAMIGALLRSDINLIGLSVMDVLLQLIAHIRKVVQMPGDPNSMRSEPHLPGEPDPRAQTVLQFADKAEQAVAERKNVLLRLQECIGDLATHVYYADQISDMISTILQKLRPTRSNSISGSPHGDKSDTPKSSVNALADEHHADSLFALTVAKIAALRAIKSVLLVANPRTKMSGNLGLSRSHVPIQIWDGTQWLLKDQDGLVRKAYADAVMTWLDRETTSADWKARDETARPMLKTRELQGAALAKRAVSSASAREKPVKVPRSHFLQLLHLAIYDNAIDYIDYETDILLLHLLLAKLVDKLGVNAVRYGLPMIFRLQEDIQDAETPIHKVRLGSLVHGYFWMLTEKFDFEGTVIGRAIHNEIVRRRSKNFWVDGVNLPVPLLDLIGTPGTVQRQPKLPSDEIESEALLPFDERLALVECVCTAYQEQTTSPPQSPAASPGRSFSHPMLGSTTSAIPSIETEHEVPDHIREQMLSEWTREAVLAAVQTASKTASLSGSRSGTTGTNRLNANGGLAANGHNPRAERSSPHGSGTNLRPSTSPMGDAMRKSSLRGHSPTPASNNGDAKEQVTSVEQLKLVLSGHLQPPPTMHGPTTFQHDDSSSDSLVSYDMTPSELSFNPATLPGAIPDHHHHHHHHQSPPQQRPVSRDRKGSVSASASAGGSGGPLNSHPTPDDMYNNSEYVSADDGDDDDDDAVPPVPPIPTGLMAEGGGSPSGSPRGGRLPSSSSSPSSKAQQQHQQHHERAAAAAVAALRRPSTSKRSVKSRGGGEHRALSSSWASMGGEDEKAPGMDLNALLKGIDAHVGEDQGLGGFGGVARPPY.

Disordered regions lie at residues 484–503 (RSNSISGSPHGDKSDTPKSS), 800–824 (TTSPPQSPAASPGRSFSHPMLGSTT), 861–940 (SKTA…KEQV), and 953–1160 (HLQP…KAPG). Low complexity-rich tracts occupy residues 800-811 (TTSPPQSPAASP) and 867-891 (SGSRSGTTGTNRLNANGGLAANGHN). Composition is skewed to polar residues over residues 899 to 912 (PHGSGTNLRPSTSP) and 928 to 940 (TPASNNGDAKEQV). Residues 1054–1065 (SADDGDDDDDDA) show a composition bias toward acidic residues. Composition is skewed to low complexity over residues 1085 to 1108 (SGSPRGGRLPSSSSSPSSKAQQQH) and 1116 to 1126 (AAAAVAALRRP).

It belongs to the EFR3 family.

The chain is Protein EFR3 (EFR3) from Chaetomium globosum (strain ATCC 6205 / CBS 148.51 / DSM 1962 / NBRC 6347 / NRRL 1970) (Soil fungus).